The primary structure comprises 718 residues: Putative proline-rich receptor-like protein kinase PERK11 (718 aa).

The disordered stretch occupies residues 1 to 256 (MDKVQQQADL…GGTSQQSNES (256 aa)). Residues 1 to 262 (MDKVQQQADL…SNESNYTEKT (262 aa)) are Extracellular-facing. 3 stretches are compositionally biased toward pro residues: residues 45–105 (ATSP…PPQS), 115–132 (IPFPKPQLPPPSLFPPPS), and 157–167 (LPSPPSTPFSP). 2 stretches are compositionally biased toward low complexity: residues 168–203 (PSQENSGSQGSPPLSSLLPPMLPLNPNSPGNPLQPL) and 211–244 (SNRVPSSSSSPSPPSLSGSNNHSGGSNRHNANSN). N-linked (GlcNAc...) asparagine glycans are attached at residues Asn-231, Asn-254, and Asn-257. The helical transmembrane segment at 263-283 (VIGIGIAGVLVILFIAGVFFV) threads the bilayer. Residues 284-718 (RRKQKKGSSS…RAFNTSHRNH (435 aa)) are Cytoplasmic-facing. Residues 314–348 (HYRQKPGNGNSSAQNSSPDTNSLGNPKHGRGTPDS) are disordered. Residues 320 to 337 (GNGNSSAQNSSPDTNSLG) are compositionally biased toward polar residues. Thr-359 is modified (phosphothreonine). Positions 370 to 649 (FCKSFVVGEG…VRALDTRDDL (280 aa)) constitute a Protein kinase domain. ATP contacts are provided by residues 376 to 384 (VGEGGFGCV) and Lys-398. Tyr-443 carries the post-translational modification Phosphotyrosine. The Proton acceptor role is filled by Asp-494. Ser-498 and Ser-527 each carry phosphoserine. 2 positions are modified to phosphothreonine: Thr-528 and Thr-533. Position 541 is a phosphotyrosine (Tyr-541). A disordered region spans residues 683–718 (SSDLGTNTGYYPSQDYATSHEYESESRAFNTSHRNH). Polar residues-rich tracts occupy residues 685 to 699 (DLGTNTGYYPSQDYA) and 709 to 718 (RAFNTSHRNH).

It belongs to the protein kinase superfamily. Ser/Thr protein kinase family. Mostly expressed in flower buds.

It is found in the cell membrane. It carries out the reaction L-seryl-[protein] + ATP = O-phospho-L-seryl-[protein] + ADP + H(+). The enzyme catalyses L-threonyl-[protein] + ATP = O-phospho-L-threonyl-[protein] + ADP + H(+). This chain is Putative proline-rich receptor-like protein kinase PERK11 (PERK11), found in Arabidopsis thaliana (Mouse-ear cress).